Consider the following 317-residue polypeptide: Malate dehydrogenase (317 aa).

Residues 10-15 (GGGQIG) and Asp-34 each bind NAD(+). The substrate site is built by Arg-83 and Arg-89. NAD(+)-binding positions include Asn-96 and 119–121 (ISN). Asn-121 and Arg-152 together coordinate substrate. The active-site Proton acceptor is His-176.

It belongs to the LDH/MDH superfamily. MDH type 3 family.

It carries out the reaction (S)-malate + NAD(+) = oxaloacetate + NADH + H(+). Functionally, catalyzes the reversible oxidation of malate to oxaloacetate. The polypeptide is Malate dehydrogenase (Geobacter sulfurreducens (strain ATCC 51573 / DSM 12127 / PCA)).